A 72-amino-acid chain; its full sequence is Large ribosomal subunit protein bL28 (72 aa).

The protein belongs to the bacterial ribosomal protein bL28 family.

This Chlorobaculum parvum (strain DSM 263 / NCIMB 8327) (Chlorobium vibrioforme subsp. thiosulfatophilum) protein is Large ribosomal subunit protein bL28.